Here is a 498-residue protein sequence, read N- to C-terminus: Guanosine-5'-triphosphate,3'-diphosphate pyrophosphatase (498 aa).

The protein belongs to the GppA/Ppx family. GppA subfamily.

It carries out the reaction guanosine 3'-diphosphate 5'-triphosphate + H2O = guanosine 3',5'-bis(diphosphate) + phosphate + H(+). The protein operates within purine metabolism; ppGpp biosynthesis; ppGpp from GTP: step 2/2. Its function is as follows. Catalyzes the conversion of pppGpp to ppGpp. Guanosine pentaphosphate (pppGpp) is a cytoplasmic signaling molecule which together with ppGpp controls the 'stringent response', an adaptive process that allows bacteria to respond to amino acid starvation, resulting in the coordinated regulation of numerous cellular activities. The polypeptide is Guanosine-5'-triphosphate,3'-diphosphate pyrophosphatase (Serratia proteamaculans (strain 568)).